We begin with the raw amino-acid sequence, 137 residues long: Cellular retinoic acid-binding protein 1 (137 aa).

The Nuclear localization signal motif lies at 21–31; that stretch reads KALGVNAMLRK. All-trans-retinoate is bound at residue 132 to 134; it reads RIY.

The protein belongs to the calycin superfamily. Fatty-acid binding protein (FABP) family.

It localises to the cytoplasm. In terms of biological role, cytosolic CRABPs may regulate the access of retinoic acid to the nuclear retinoic acid receptors. This Gallus gallus (Chicken) protein is Cellular retinoic acid-binding protein 1 (CRABP1).